The primary structure comprises 238 residues: uncharacterized protein (238 aa).

In terms of domain architecture, Response regulatory spans Arg-3–Ser-116. Residue Asp-54 is modified to 4-aspartylphosphate. In terms of domain architecture, HTH LytTR-type spans Ile-136–Ile-237.

This is an uncharacterized protein from Yersinia pestis.